Here is a 212-residue protein sequence, read N- to C-terminus: Ribonuclease HII (212 aa).

An RNase H type-2 domain is found at 1 to 206; it reads MICGVDEAGK…VKNLLHQKNQ (206 aa). Residues Asp6, Glu7, and Asp101 each coordinate a divalent metal cation.

This sequence belongs to the RNase HII family. It depends on Mn(2+) as a cofactor. Requires Mg(2+) as cofactor.

Its subcellular location is the cytoplasm. The catalysed reaction is Endonucleolytic cleavage to 5'-phosphomonoester.. Its function is as follows. Endonuclease that specifically degrades the RNA of RNA-DNA hybrids. The protein is Ribonuclease HII of Methanospirillum hungatei JF-1 (strain ATCC 27890 / DSM 864 / NBRC 100397 / JF-1).